Consider the following 371-residue polypeptide: MGRLVLLWGAAVFLLGGWMALGQGGAAEGVQIQIIYFNLETVQVTWNASKYSRTNLTFHYRFNGDEAYDQCTNYLLQEGHTSGCLLDAEQRDDILYFSIRNGTHPVFTASRWMVYYLKPSSPKHVRFSWHQDAVTVTCSDLSYGDLLYEVQYRSPFDTEWQSKQENTCNVTIEGLDAEKCYSFWVRVKAMEDVYGPDTYPSDWSEVTCWQRGEIRDACAETPTPPKPKLSKFILISSLAILLMVSLLLLSLWKLWRVKKFLIPSVPDPKSIFPGLFEIHQGNFQEWITDTQNVAHLHKMAGAEQESGPEEPLVVQLAKTEAESPRMLDPQTEEKEASGGSLQLPHQPLQGGDVVTIGGFTFVMNDRSYVAL.

Residues 1-22 form the signal peptide; it reads MGRLVLLWGAAVFLLGGWMALG. The Extracellular portion of the chain corresponds to 23–231; it reads QGGAAEGVQI…PTPPKPKLSK (209 aa). Asparagine 47 and asparagine 55 each carry an N-linked (GlcNAc...) asparagine glycan. A disulfide bridge links cysteine 71 with cysteine 84. N-linked (GlcNAc...) asparagine glycans are attached at residues asparagine 101 and asparagine 169. One can recognise a Fibronectin type-III domain in the interval 118-211; sequence KPSSPKHVRF…DWSEVTCWQR (94 aa). An intrachain disulfide couples cysteine 180 to cysteine 218. The WSXWS motif signature appears at 200–204; sequence PSDWS. The helical transmembrane segment at 232 to 252 threads the bilayer; that stretch reads FILISSLAILLMVSLLLLSLW. Topologically, residues 253–371 are cytoplasmic; that stretch reads KLWRVKKFLI…VMNDRSYVAL (119 aa). The Box 1 motif signature appears at 261-269; the sequence is LIPSVPDPK. Residues 322-336 are compositionally biased toward basic and acidic residues; that stretch reads ESPRMLDPQTEEKEA. The interval 322–347 is disordered; it reads ESPRMLDPQTEEKEASGGSLQLPHQP.

It belongs to the type I cytokine receptor family. Type 5 subfamily. Heterodimer of CRLF2 and IL7R. Expressed in heart, skeletal muscle, kidney and adult and fetal liver. Primarily expressed in dendrites and monocytes. Weakly expressed in T-cells.

The protein localises to the cell membrane. Its subcellular location is the secreted. In terms of biological role, receptor for thymic stromal lymphopoietin (TSLP). Forms a functional complex with TSLP and IL7R which is capable of stimulating cell proliferation through activation of STAT3 and STAT5. Also activates JAK2. Implicated in the development of the hematopoietic system. The polypeptide is Cytokine receptor-like factor 2 (CRLF2) (Homo sapiens (Human)).